Consider the following 96-residue polypeptide: Large ribosomal subunit protein bL27 (96 aa).

Residues 1–11 constitute a propeptide that is removed on maturation; that stretch reads MLKTLENLQLF. Residues 13-36 are disordered; that stretch reads HKKGGGSTSNGRDSQAKRLGAKAA.

This sequence belongs to the bacterial ribosomal protein bL27 family. Post-translationally, the N-terminus is cleaved by ribosomal processing cysteine protease Prp.

The chain is Large ribosomal subunit protein bL27 from Streptococcus thermophilus (strain CNRZ 1066).